The following is a 517-amino-acid chain: tRNA-2-methylthio-N(6)-dimethylallyladenosine synthase (517 aa).

The MTTase N-terminal domain maps to R29–H146. 6 residues coordinate [4Fe-4S] cluster: C38, C75, C109, C183, C187, and C190. In terms of domain architecture, Radical SAM core spans R169–Q405. Residues Q408–V475 enclose the TRAM domain.

It belongs to the methylthiotransferase family. MiaB subfamily. Monomer. [4Fe-4S] cluster serves as cofactor.

It localises to the cytoplasm. The catalysed reaction is N(6)-dimethylallyladenosine(37) in tRNA + (sulfur carrier)-SH + AH2 + 2 S-adenosyl-L-methionine = 2-methylsulfanyl-N(6)-dimethylallyladenosine(37) in tRNA + (sulfur carrier)-H + 5'-deoxyadenosine + L-methionine + A + S-adenosyl-L-homocysteine + 2 H(+). Functionally, catalyzes the methylthiolation of N6-(dimethylallyl)adenosine (i(6)A), leading to the formation of 2-methylthio-N6-(dimethylallyl)adenosine (ms(2)i(6)A) at position 37 in tRNAs that read codons beginning with uridine. The sequence is that of tRNA-2-methylthio-N(6)-dimethylallyladenosine synthase from Mycolicibacterium paratuberculosis (strain ATCC BAA-968 / K-10) (Mycobacterium paratuberculosis).